The sequence spans 232 residues: Octanoyltransferase (232 aa).

A BPL/LPL catalytic domain is found at Gly33 to Ser216. Substrate contacts are provided by residues Arg71–His78, Ala146–Gly148, and Gly159–Ala161. Catalysis depends on Cys177, which acts as the Acyl-thioester intermediate.

It belongs to the LipB family.

The protein localises to the cytoplasm. It carries out the reaction octanoyl-[ACP] + L-lysyl-[protein] = N(6)-octanoyl-L-lysyl-[protein] + holo-[ACP] + H(+). It participates in protein modification; protein lipoylation via endogenous pathway; protein N(6)-(lipoyl)lysine from octanoyl-[acyl-carrier-protein]: step 1/2. Its function is as follows. Catalyzes the transfer of endogenously produced octanoic acid from octanoyl-acyl-carrier-protein onto the lipoyl domains of lipoate-dependent enzymes. Lipoyl-ACP can also act as a substrate although octanoyl-ACP is likely to be the physiological substrate. The protein is Octanoyltransferase of Clavibacter sepedonicus (Clavibacter michiganensis subsp. sepedonicus).